The following is a 352-amino-acid chain: Ion-translocating oxidoreductase complex subunit D (352 aa).

4 helical membrane passes run 20 to 40, 42 to 62, 69 to 91, and 123 to 143; these read IMLLVVIAALPGIAAQTWFFG, GTLFQIVLAAITALVAEAIVL, VASHLQDYSALLTGLLLAVSIPP, and PAMIGYVVLLISFPVQMTSWL. An FMN phosphoryl threonine modification is found at threonine 187. A run of 5 helical transmembrane segments spans residues 215-235, 242-262, 267-287, 301-321, and 322-342; these read LAGVGWQWVNLAWLVGGVFLL, WHIPVSFLLTLALCAALGWLF, LASPQLHLLSGATMLGAFFIL, LIFGALAGVLVWLIRSFGGYP, and DGVAFAVLLANITVPLIDYYT.

The protein belongs to the NqrB/RnfD family. In terms of assembly, the complex is composed of six subunits: RsxA, RsxB, RsxC, RsxD, RsxE and RsxG. It depends on FMN as a cofactor.

It is found in the cell inner membrane. Part of a membrane-bound complex that couples electron transfer with translocation of ions across the membrane. Required to maintain the reduced state of SoxR. The protein is Ion-translocating oxidoreductase complex subunit D of Salmonella agona (strain SL483).